The chain runs to 250 residues: Probable E3 ubiquitin-protein ligase RHY1A (250 aa).

A compositionally biased stretch (polar residues) spans 1-10 (MTSASELFST). The disordered stretch occupies residues 1-106 (MTSASELFST…ETQSSSFVNL (106 aa)). The span at 29–47 (YRHHSHHHHRRHGVHHHNQ) shows a compositional bias: basic residues. The span at 48–58 (RHDSDGCDPLR) shows a compositional bias: basic and acidic residues. Over residues 60 to 69 (PTPRLRRFFH) the composition is skewed to basic residues. The span at 71-80 (PIQERSRPIR) shows a compositional bias: basic and acidic residues. Over residues 91 to 102 (TDSTDTETQSSS) the composition is skewed to low complexity. The RING-type; atypical zinc finger occupies 203 to 244 (CSICLESFTKGDMLISLPCTHSFHSSCLNPWLRACGDCPCCR).

The enzyme catalyses S-ubiquitinyl-[E2 ubiquitin-conjugating enzyme]-L-cysteine + [acceptor protein]-L-lysine = [E2 ubiquitin-conjugating enzyme]-L-cysteine + N(6)-ubiquitinyl-[acceptor protein]-L-lysine.. Its pathway is protein modification; protein ubiquitination. Functionally, probable E3 ubiquitin-protein ligase that may possess E3 ubiquitin ligase activity in vitro. The sequence is that of Probable E3 ubiquitin-protein ligase RHY1A from Arabidopsis thaliana (Mouse-ear cress).